A 388-amino-acid chain; its full sequence is Na(+)/H(+) antiporter NhaA (388 aa).

The next 12 membrane-spanning stretches (helical) occupy residues 8–28 (FLKLEAAGGLLLIITAIIALI), 33–53 (PLQGIYQQFLNISVAVQFAAL), 59–79 (LLLWINDGLMAVFFLIVGLEV), 95–115 (LFPVIAAIGGMVAPALIYLLF), 125–145 (GWAIPAATDIAFALGVMALLS), 154–174 (VFLLALAIIDDLGVIVIIALF), 179–199 (VSLVALGLSAAMIALLVWMNW), 217–237 (VCILKSGVHATLAGVIVGFLI), 259–279 (VAYLILPLFAFANAGVALNGV), 287–307 (ILPLGIAVALFLGKPLGIFLF), 328–348 (IFAVSVLCGIGFTMSIFISGL), and 363–383 (LGILMGSTIAAFMGYGLLRMV).

Belongs to the NhaA Na(+)/H(+) (TC 2.A.33) antiporter family.

It is found in the cell inner membrane. The enzyme catalyses Na(+)(in) + 2 H(+)(out) = Na(+)(out) + 2 H(+)(in). Functionally, na(+)/H(+) antiporter that extrudes sodium in exchange for external protons. In Photorhabdus laumondii subsp. laumondii (strain DSM 15139 / CIP 105565 / TT01) (Photorhabdus luminescens subsp. laumondii), this protein is Na(+)/H(+) antiporter NhaA.